We begin with the raw amino-acid sequence, 201 residues long: UPF0301 protein Rleg2_0617 (201 aa).

The protein belongs to the UPF0301 (AlgH) family.

In Rhizobium leguminosarum bv. trifolii (strain WSM2304), this protein is UPF0301 protein Rleg2_0617.